Reading from the N-terminus, the 343-residue chain is Undecaprenyl-diphosphatase 2 (343 aa).

Transmembrane regions (helical) follow at residues 21–41 (LFPVSSLGHSVLIPALIGGSW), 57–77 (PYLTFVVGLHVATAVALLVFF), 104–124 (LAWLIVAATVPVGIIGLALEH), and 129–149 (LFAKPLAAALFLTANGMILLA). Residues 179-193 (VPAPATVPTQTTSAP) show a composition bias toward low complexity. Positions 179–202 (VPAPATVPTQTTSAPGGRATARHT) are disordered. A run of 4 helical transmembrane segments spans residues 225-245 (AGVIGLFQTLALLAGISRSGI), 265-285 (FLLATPVILAAGLLKLPALAG), 294-314 (QVILGALIAGIAAYLSIRFLV), and 322-342 (LTPFAIYCLLTGALCTVRFAI).

This sequence belongs to the UppP family.

The protein localises to the cell membrane. It catalyses the reaction di-trans,octa-cis-undecaprenyl diphosphate + H2O = di-trans,octa-cis-undecaprenyl phosphate + phosphate + H(+). Its function is as follows. Catalyzes the dephosphorylation of undecaprenyl diphosphate (UPP). Confers resistance to bacitracin. This is Undecaprenyl-diphosphatase 2 from Frankia alni (strain DSM 45986 / CECT 9034 / ACN14a).